The chain runs to 933 residues: Valine--tRNA ligase (933 aa).

The disordered stretch occupies residues 1–24 (MIERVKTTKLSEASGLPKTYDPVG). A 'HIGH' region motif is present at residues 57–67 (PNVTGSLHMGH). A 'KMSKS' region motif is present at residues 557–561 (KMSKS). Residue lysine 560 coordinates ATP. Residues 866–932 (LIDIASLRSR…RLVKERLMGL (67 aa)) adopt a coiled-coil conformation.

This sequence belongs to the class-I aminoacyl-tRNA synthetase family. ValS type 1 subfamily. In terms of assembly, monomer.

The protein localises to the cytoplasm. The catalysed reaction is tRNA(Val) + L-valine + ATP = L-valyl-tRNA(Val) + AMP + diphosphate. In terms of biological role, catalyzes the attachment of valine to tRNA(Val). As ValRS can inadvertently accommodate and process structurally similar amino acids such as threonine, to avoid such errors, it has a 'posttransfer' editing activity that hydrolyzes mischarged Thr-tRNA(Val) in a tRNA-dependent manner. The chain is Valine--tRNA ligase from Prochlorococcus marinus (strain NATL2A).